The primary structure comprises 890 residues: Translation initiation factor IF-2 (890 aa).

Positions 45-304 are disordered; the sequence is LIDHLNQKNS…LQQGFQKPAQ (260 aa). Polar residues predominate over residues 67 to 81; sequence STLNIPGTGGKSKSV. Residues 92–217 are compositionally biased toward basic and acidic residues; sequence VKRDPQEAER…RMAEENKWTD (126 aa). A compositionally biased stretch (basic residues) spans 252–266; sequence GRGRNAKAARPKKGN. Basic and acidic residues predominate over residues 267–280; it reads KHSESKADREEARA. Positions 389–558 constitute a tr-type G domain; sequence PRAPVVTIMG…LLQAEVLELK (170 aa). The segment at 398–405 is G1; it reads GHVDHGKT. 398 to 405 provides a ligand contact to GTP; that stretch reads GHVDHGKT. The segment at 423–427 is G2; that stretch reads GITQH. Positions 444-447 are G3; that stretch reads DTPG. GTP is bound by residues 444-448 and 498-501; these read DTPGH and NKID. A G4 region spans residues 498-501; the sequence is NKID. A G5 region spans residues 534-536; that stretch reads SAK. Lysine 808 carries the N6-acetyllysine modification.

It belongs to the TRAFAC class translation factor GTPase superfamily. Classic translation factor GTPase family. IF-2 subfamily.

It localises to the cytoplasm. One of the essential components for the initiation of protein synthesis. Protects formylmethionyl-tRNA from spontaneous hydrolysis and promotes its binding to the 30S ribosomal subunits. Also involved in the hydrolysis of GTP during the formation of the 70S ribosomal complex. The protein is Translation initiation factor IF-2 of Escherichia fergusonii (strain ATCC 35469 / DSM 13698 / CCUG 18766 / IAM 14443 / JCM 21226 / LMG 7866 / NBRC 102419 / NCTC 12128 / CDC 0568-73).